A 436-amino-acid chain; its full sequence is 3-ketoacyl-CoA thiolase (436 aa).

The Acyl-thioester intermediate role is filled by Cys-99. Residues His-392 and Cys-422 each act as proton acceptor in the active site.

It belongs to the thiolase-like superfamily. Thiolase family. As to quaternary structure, heterotetramer of two alpha chains (FadJ) and two beta chains (FadI).

The protein resides in the cytoplasm. The enzyme catalyses an acyl-CoA + acetyl-CoA = a 3-oxoacyl-CoA + CoA. It functions in the pathway lipid metabolism; fatty acid beta-oxidation. Its function is as follows. Catalyzes the final step of fatty acid oxidation in which acetyl-CoA is released and the CoA ester of a fatty acid two carbons shorter is formed. This is 3-ketoacyl-CoA thiolase from Shewanella baltica (strain OS185).